A 341-amino-acid chain; its full sequence is Protein phosphatase methylesterase 1 (341 aa).

Positions Met1 to Lys24 are disordered. The segment covering Ser9–Ser20 has biased composition (polar residues). Residues Ser153, Asp178, and His304 contribute to the active site.

The protein belongs to the AB hydrolase superfamily.

It catalyses the reaction [phosphatase 2A protein]-C-terminal L-leucine methyl ester + H2O = [phosphatase 2A protein]-C-terminal L-leucine + methanol + H(+). Its function is as follows. Demethylates proteins that have been reversibly carboxymethylated. Demethylates the phosphatase PP2A catalytic subunit. The sequence is that of Protein phosphatase methylesterase 1 (ppe1) from Schizosaccharomyces pombe (strain 972 / ATCC 24843) (Fission yeast).